The chain runs to 427 residues: Phosphomethylpyrimidine synthase (427 aa).

Substrate is bound by residues asparagine 66, methionine 95, tyrosine 124, histidine 163, 185–187, 226–229, and glutamate 265; these read SRG and DGLR. Histidine 269 contacts Zn(2+). Tyrosine 292 is a substrate binding site. Histidine 333 is a Zn(2+) binding site. [4Fe-4S] cluster is bound by residues cysteine 409, cysteine 412, and cysteine 416.

It belongs to the ThiC family. As to quaternary structure, homodimer. Requires [4Fe-4S] cluster as cofactor.

It carries out the reaction 5-amino-1-(5-phospho-beta-D-ribosyl)imidazole + S-adenosyl-L-methionine = 4-amino-2-methyl-5-(phosphooxymethyl)pyrimidine + CO + 5'-deoxyadenosine + formate + L-methionine + 3 H(+). It functions in the pathway cofactor biosynthesis; thiamine diphosphate biosynthesis. Its function is as follows. Catalyzes the synthesis of the hydroxymethylpyrimidine phosphate (HMP-P) moiety of thiamine from aminoimidazole ribotide (AIR) in a radical S-adenosyl-L-methionine (SAM)-dependent reaction. The polypeptide is Phosphomethylpyrimidine synthase (Syntrophus aciditrophicus (strain SB)).